Reading from the N-terminus, the 182-residue chain is Glutathione-regulated potassium-efflux system ancillary protein KefG (182 aa).

The protein belongs to the NAD(P)H dehydrogenase (quinone) family. KefG subfamily. In terms of assembly, interacts with KefB.

The protein localises to the cell inner membrane. It carries out the reaction a quinone + NADH + H(+) = a quinol + NAD(+). It catalyses the reaction a quinone + NADPH + H(+) = a quinol + NADP(+). In terms of biological role, regulatory subunit of a potassium efflux system that confers protection against electrophiles. Required for full activity of KefB. The chain is Glutathione-regulated potassium-efflux system ancillary protein KefG from Yersinia pestis bv. Antiqua (strain Nepal516).